A 446-amino-acid chain; its full sequence is Tol-Pal system protein TolB (446 aa).

A signal peptide spans 1-36 (MMDVQTVRRGNAVQSLMSKLILPLVMAVAFALPARA). The tract at residues 424 to 446 (GYNERPSPTPTFASDPAWSPRIQ) is disordered.

It belongs to the TolB family. The Tol-Pal system is composed of five core proteins: the inner membrane proteins TolA, TolQ and TolR, the periplasmic protein TolB and the outer membrane protein Pal. They form a network linking the inner and outer membranes and the peptidoglycan layer.

It is found in the periplasm. Part of the Tol-Pal system, which plays a role in outer membrane invagination during cell division and is important for maintaining outer membrane integrity. In Parvibaculum lavamentivorans (strain DS-1 / DSM 13023 / NCIMB 13966), this protein is Tol-Pal system protein TolB.